The primary structure comprises 1574 residues: RNA2 polyprotein (1574 aa).

Residues 361 to 422 (ERVKAFSSHH…ERLRAAKEDR (62 aa)) are a coiled coil. Disordered regions lie at residues 557 to 579 (PPPIITAPVGQRVGGNPPTETPG) and 863 to 916 (RSAT…RGYT).

Post-translationally, specific enzymatic cleavages by RNA1 encoded picornain 3C-like protease in vivo yield mature proteins.

It localises to the host cell junction. The protein resides in the host plasmodesma. It is found in the virion. Its function is as follows. Transports viral genome to neighboring plant cells directly through plasmosdesmata, without any budding. The movement protein allows efficient cell to cell propagation, by bypassing the host cell wall barrier. Acts by forming a tubular structure at the host plasmodesmata, enlarging it enough to allow free passage of virion capsids. Functionally, capsid proteins form a capsid enclosing the viral positive strand RNA genome. Together they form an icosahedral capsid pseudo T=3 with a diameter of approximately 30 nm (Potential). The protein is RNA2 polyprotein of Citrus unshiu (Satsuma mandarin).